Reading from the N-terminus, the 225-residue chain is Fibroblast growth factor 11 (225 aa).

Residues 1 to 28 form a disordered region; it reads MAALASSLIRQKREVREPGGSRPVSAQR.

The protein belongs to the heparin-binding growth factors family. As to expression, brain and eye, and in a segmental pattern of the embryonic body wall. In adult olfactory bulb, hippocampus and most concentrated in Purkinje cell layer of the cerebellum.

It localises to the nucleus. Its function is as follows. Probably involved in nervous system development and function. This Mus musculus (Mouse) protein is Fibroblast growth factor 11 (Fgf11).